Consider the following 118-residue polypeptide: Peptidyl-prolyl cis-trans isomerase Pin1 (118 aa).

Disordered stretches follow at residues 1-37 (MSSEKVRASHILIKHQGSRRKSSWKDPDGSLISATTR) and 61-84 (LASRHSHCSSAKRGGDLGPFGRGQ). Positions 3 to 118 (SEKVRASHIL…SGVHIIKRTG (116 aa)) constitute a PpiC domain. Basic residues predominate over residues 12-22 (LIKHQGSRRKS).

The protein belongs to the PpiC/parvulin rotamase family. The N-terminus is blocked. As to expression, expressed in roots, stems, leaves, flowers and seedlings.

It localises to the cytoplasm. Its subcellular location is the nucleus. The enzyme catalyses [protein]-peptidylproline (omega=180) = [protein]-peptidylproline (omega=0). With respect to regulation, inhibited in vitro by juglone. Functionally, prolyl cis/trans isomerase with specificity for phospho-Ser-Pro bonds. In Digitalis lanata (Grecian foxglove), this protein is Peptidyl-prolyl cis-trans isomerase Pin1 (PARV12.8).